Consider the following 37-residue polypeptide: Neuropeptide Y2-like conopeptide (37 aa).

Y37 is subject to Tyrosine amide.

The protein belongs to the NPY family. Expressed by the venom duct.

It is found in the secreted. Its function is as follows. Causes hyperactivity such as jumping, rapid circling and tail flicking, after intraventicular injection into mouse brain. The sequence is that of Neuropeptide Y2-like conopeptide from Conus betulinus (Beech cone).